Here is a 313-residue protein sequence, read N- to C-terminus: PDZ domain-containing protein GIPC2 (313 aa).

Positions 14-27 (KETSRLVEGEHTDA) are enriched in basic and acidic residues. Residues 14–34 (KETSRLVEGEHTDAAVRSLPS) form a disordered region. Positions 117–197 (EVNVYKSEDS…EELFTLTLIE (81 aa)) constitute a PDZ domain.

It belongs to the GIPC family. Probably interacts with SEMA5A.

It is found in the cytoplasm. In Bos taurus (Bovine), this protein is PDZ domain-containing protein GIPC2 (GIPC2).